The sequence spans 434 residues: ATP-dependent protease ATPase subunit HslU (434 aa).

Residues Ile-18, 60–65, Asp-247, Glu-312, and Arg-384 contribute to the ATP site; that span reads GVGKTE.

It belongs to the ClpX chaperone family. HslU subfamily. As to quaternary structure, a double ring-shaped homohexamer of HslV is capped on each side by a ring-shaped HslU homohexamer. The assembly of the HslU/HslV complex is dependent on binding of ATP.

The protein resides in the cytoplasm. Its function is as follows. ATPase subunit of a proteasome-like degradation complex; this subunit has chaperone activity. The binding of ATP and its subsequent hydrolysis by HslU are essential for unfolding of protein substrates subsequently hydrolyzed by HslV. HslU recognizes the N-terminal part of its protein substrates and unfolds these before they are guided to HslV for hydrolysis. In Sinorhizobium fredii (strain NBRC 101917 / NGR234), this protein is ATP-dependent protease ATPase subunit HslU.